The sequence spans 112 residues: Small ribosomal subunit protein bS6 (112 aa).

The protein belongs to the bacterial ribosomal protein bS6 family.

Functionally, binds together with bS18 to 16S ribosomal RNA. The sequence is that of Small ribosomal subunit protein bS6 from Hyphomonas neptunium (strain ATCC 15444).